The sequence spans 377 residues: Flagellar P-ring protein (377 aa).

The first 33 residues, 1–33 (MRYPVSTGIAAPAWFAFFCAWAGLWTFSLPVQA), serve as a signal peptide directing secretion.

This sequence belongs to the FlgI family. In terms of assembly, the basal body constitutes a major portion of the flagellar organelle and consists of four rings (L,P,S, and M) mounted on a central rod.

It localises to the periplasm. It is found in the bacterial flagellum basal body. Functionally, assembles around the rod to form the L-ring and probably protects the motor/basal body from shearing forces during rotation. The sequence is that of Flagellar P-ring protein from Nitrosospira multiformis (strain ATCC 25196 / NCIMB 11849 / C 71).